The chain runs to 103 residues: ATP synthase F(0) complex subunit g, mitochondrial (103 aa).

Ala2 is subject to N-acetylalanine. 3 positions are modified to N6-acetyllysine: Lys11, Lys24, and Lys54.

It belongs to the ATPase g subunit family. Component of the ATP synthase complex composed at least of ATP5F1A/subunit alpha, ATP5F1B/subunit beta, ATP5MC1/subunit c (homooctomer), MT-ATP6/subunit a, MT-ATP8/subunit 8, ATP5ME/subunit e, ATP5MF/subunit f, ATP5MG/subunit g, ATP5MK/subunit k, ATP5MJ/subunit j, ATP5F1C/subunit gamma, ATP5F1D/subunit delta, ATP5F1E/subunit epsilon, ATP5PF/subunit F6, ATP5PB/subunit b, ATP5PD/subunit d, ATP5PO/subunit OSCP. ATP synthase complex consists of a soluble F(1) head domain (subunits alpha(3) and beta(3)) - the catalytic core - and a membrane F(0) domain - the membrane proton channel (subunits c, a, 8, e, f, g, k and j). These two domains are linked by a central stalk (subunits gamma, delta, and epsilon) rotating inside the F1 region and a stationary peripheral stalk (subunits F6, b, d, and OSCP).

It localises to the mitochondrion. The protein localises to the mitochondrion inner membrane. In terms of biological role, subunit g, of the mitochondrial membrane ATP synthase complex (F(1)F(0) ATP synthase or Complex V) that produces ATP from ADP in the presence of a proton gradient across the membrane which is generated by electron transport complexes of the respiratory chain. ATP synthase complex consist of a soluble F(1) head domain - the catalytic core - and a membrane F(1) domain - the membrane proton channel. These two domains are linked by a central stalk rotating inside the F(1) region and a stationary peripheral stalk. During catalysis, ATP synthesis in the catalytic domain of F(1) is coupled via a rotary mechanism of the central stalk subunits to proton translocation. In vivo, can only synthesize ATP although its ATP hydrolase activity can be activated artificially in vitro. Part of the complex F(0) domain. In Rattus norvegicus (Rat), this protein is ATP synthase F(0) complex subunit g, mitochondrial.